The chain runs to 72 residues: Translation initiation factor IF-1 (72 aa).

The S1-like domain maps to Met1–Lys72.

Belongs to the IF-1 family. As to quaternary structure, component of the 30S ribosomal translation pre-initiation complex which assembles on the 30S ribosome in the order IF-2 and IF-3, IF-1 and N-formylmethionyl-tRNA(fMet); mRNA recruitment can occur at any time during PIC assembly.

Its subcellular location is the cytoplasm. In terms of biological role, one of the essential components for the initiation of protein synthesis. Stabilizes the binding of IF-2 and IF-3 on the 30S subunit to which N-formylmethionyl-tRNA(fMet) subsequently binds. Helps modulate mRNA selection, yielding the 30S pre-initiation complex (PIC). Upon addition of the 50S ribosomal subunit IF-1, IF-2 and IF-3 are released leaving the mature 70S translation initiation complex. The protein is Translation initiation factor IF-1 of Gluconobacter oxydans (strain 621H) (Gluconobacter suboxydans).